Consider the following 269-residue polypeptide: Protein-L-isoaspartate O-methyltransferase (269 aa).

The segment at Met1–Gly53 is disordered. Ser113 is a catalytic residue.

It belongs to the methyltransferase superfamily. L-isoaspartyl/D-aspartyl protein methyltransferase family.

It localises to the cytoplasm. The enzyme catalyses [protein]-L-isoaspartate + S-adenosyl-L-methionine = [protein]-L-isoaspartate alpha-methyl ester + S-adenosyl-L-homocysteine. Catalyzes the methyl esterification of L-isoaspartyl residues in peptides and proteins that result from spontaneous decomposition of normal L-aspartyl and L-asparaginyl residues. It plays a role in the repair and/or degradation of damaged proteins. This chain is Protein-L-isoaspartate O-methyltransferase, found in Methylibium petroleiphilum (strain ATCC BAA-1232 / LMG 22953 / PM1).